The following is a 262-amino-acid chain: Glutamate racemase (262 aa).

Residues 5-6 (DS) and 37-38 (YG) contribute to the substrate site. The Proton donor/acceptor role is filled by C69. A substrate-binding site is contributed by 70–71 (NT). Residue C181 is the Proton donor/acceptor of the active site. 182–183 (TH) contributes to the substrate binding site.

The protein belongs to the aspartate/glutamate racemases family.

The enzyme catalyses L-glutamate = D-glutamate. It participates in cell wall biogenesis; peptidoglycan biosynthesis. Its function is as follows. Provides the (R)-glutamate required for cell wall biosynthesis. In Buchnera aphidicola subsp. Acyrthosiphon pisum (strain 5A), this protein is Glutamate racemase.